A 338-amino-acid polypeptide reads, in one-letter code: tRNA N6-adenosine threonylcarbamoyltransferase (338 aa).

2 residues coordinate Fe cation: His114 and His118. Residues 136-140 (LVSGG), Asp169, Gly182, Asp186, and Asn275 contribute to the substrate site. Asp301 is a Fe cation binding site.

The protein belongs to the KAE1 / TsaD family. Fe(2+) serves as cofactor.

It is found in the cytoplasm. It carries out the reaction L-threonylcarbamoyladenylate + adenosine(37) in tRNA = N(6)-L-threonylcarbamoyladenosine(37) in tRNA + AMP + H(+). In terms of biological role, required for the formation of a threonylcarbamoyl group on adenosine at position 37 (t(6)A37) in tRNAs that read codons beginning with adenine. Is involved in the transfer of the threonylcarbamoyl moiety of threonylcarbamoyl-AMP (TC-AMP) to the N6 group of A37, together with TsaE and TsaB. TsaD likely plays a direct catalytic role in this reaction. In Streptococcus equi subsp. equi (strain 4047), this protein is tRNA N6-adenosine threonylcarbamoyltransferase.